The primary structure comprises 337 residues: tRNA N6-adenosine threonylcarbamoyltransferase (337 aa).

Fe cation contacts are provided by H111 and H115. Substrate is bound by residues 134–138 (LVSGG), D167, G180, and N272. Fe cation is bound at residue D300.

This sequence belongs to the KAE1 / TsaD family. Fe(2+) serves as cofactor.

The protein localises to the cytoplasm. It catalyses the reaction L-threonylcarbamoyladenylate + adenosine(37) in tRNA = N(6)-L-threonylcarbamoyladenosine(37) in tRNA + AMP + H(+). Functionally, required for the formation of a threonylcarbamoyl group on adenosine at position 37 (t(6)A37) in tRNAs that read codons beginning with adenine. Is involved in the transfer of the threonylcarbamoyl moiety of threonylcarbamoyl-AMP (TC-AMP) to the N6 group of A37, together with TsaE and TsaB. TsaD likely plays a direct catalytic role in this reaction. This chain is tRNA N6-adenosine threonylcarbamoyltransferase, found in Aeromonas hydrophila subsp. hydrophila (strain ATCC 7966 / DSM 30187 / BCRC 13018 / CCUG 14551 / JCM 1027 / KCTC 2358 / NCIMB 9240 / NCTC 8049).